The chain runs to 708 residues: Elongation factor G (708 aa).

One can recognise a tr-type G domain in the interval Lys-8 to Met-290. Residues Ala-17 to Thr-24, Asp-88 to His-92, and Asn-142 to Asp-145 each bind GTP.

Belongs to the TRAFAC class translation factor GTPase superfamily. Classic translation factor GTPase family. EF-G/EF-2 subfamily.

It localises to the cytoplasm. In terms of biological role, catalyzes the GTP-dependent ribosomal translocation step during translation elongation. During this step, the ribosome changes from the pre-translocational (PRE) to the post-translocational (POST) state as the newly formed A-site-bound peptidyl-tRNA and P-site-bound deacylated tRNA move to the P and E sites, respectively. Catalyzes the coordinated movement of the two tRNA molecules, the mRNA and conformational changes in the ribosome. The polypeptide is Elongation factor G (Psychrobacter arcticus (strain DSM 17307 / VKM B-2377 / 273-4)).